The following is a 514-amino-acid chain: Coiled-coil domain-containing protein 174 (514 aa).

Disordered stretches follow at residues 42-83 (AKPK…DQSR) and 137-162 (TLEKETDDEEIEPEMEIPPPEDPDEE). The segment covering 63-83 (KRAEKDIEQKAEEDQTLDQSR) has biased composition (basic and acidic residues). Residues 66-98 (EKDIEQKAEEDQTLDQSRKKLEEKAKLYEKMTK) are a coiled coil. Acidic residues predominate over residues 141 to 162 (ETDDEEIEPEMEIPPPEDPDEE). Coiled-coil stretches lie at residues 203 to 227 (LLSEDMKRELQRQQWEKEEEEALRK) and 266 to 321 (LDML…LENG). Disordered stretches follow at residues 270–291 (REQTLDQRTKREQLKEKRKAAL) and 306–490 (LREE…PSAH). Composition is skewed to basic and acidic residues over residues 335–354 (EVPRPSRKVEVVIQERRDTK) and 376–388 (KKQEELRDERDPE). Positions 405 to 418 (YSSQNLNSPETSPG) are enriched in polar residues. Residues 420-429 (TEPEISENQK) show a composition bias toward basic and acidic residues.

The protein resides in the nucleus. Its function is as follows. Probably involved in neuronal development. This Gallus gallus (Chicken) protein is Coiled-coil domain-containing protein 174 (CCDC174).